The following is a 214-amino-acid chain: Refilin-B (214 aa).

The tract at residues 1-56 (MVGRLSLQDVPELVDAKKKGDGVLDSPDSGLPPSPSPSHWGLAAGGGGGERAAAPG) is disordered. Phosphoserine occurs at positions 6 and 26.

This sequence belongs to the Refilin family. Interacts with FLNA and FLNB.

It localises to the cytoplasm. The protein resides in the cytoskeleton. In terms of biological role, involved in the regulation of the perinuclear actin network and nuclear shape through interaction with filamins. Plays an essential role in the formation of cartilaginous skeletal elements. The polypeptide is Refilin-B (Homo sapiens (Human)).